The following is a 342-amino-acid chain: MKRKTLTQYLVEQQRSANALGPEVRLLIEVVARACKAISHAVSKGALGGVLGSLESENVQGEVQKKLDVLSNEILLEANEWGGHLAAMASEEMETIHLIPNRYPKGEYLLLFDPLDGSSNIDVNVSIGTIFSVLHAPHRVAGAEEVCEQDFLQPGSQQVAAGYAVYGPQTMLVLTIGTGVVGFTLDREMGSWVLTHENMRVPEDTKEFAINMSNMRHWAPPVRRYIDECLAGTTGPLGKDYNMRWIASMVADVHRIMTRGGIFMYPWDAREPGKAGKLRLMYEANPMSMIIEQAGGAAIDGTRRILDIQPDKLHQRVSVILGSKNEVERVGRYHAEAAQAPA.

Residues Glu-91, Asp-113, Leu-115, and Asp-116 each contribute to the Mg(2+) site. Substrate contacts are provided by residues 116–119 (DGSS), Asn-211, and Lys-277. Mg(2+) is bound at residue Glu-283.

Belongs to the FBPase class 1 family. In terms of assembly, homotetramer. Requires Mg(2+) as cofactor.

Its subcellular location is the cytoplasm. It carries out the reaction beta-D-fructose 1,6-bisphosphate + H2O = beta-D-fructose 6-phosphate + phosphate. Its pathway is carbohydrate biosynthesis; gluconeogenesis. In Bordetella petrii (strain ATCC BAA-461 / DSM 12804 / CCUG 43448), this protein is Fructose-1,6-bisphosphatase class 1.